Consider the following 202-residue polypeptide: Matrix protein (202 aa).

A PPXY motif motif is present at residues 35–38; that stretch reads PPEY. The segment at 115-151 is essential for glycoprotein binding; the sequence is KLRRTLIFQWADSRGPLEGEELEYSQEITWDDDTEFV.

The protein belongs to the lyssavirus matrix protein family. Homomultimer. Interacts with nucleoprotein and with the cytoplasmic domain of glycoprotein. Interacts with host ATP6V1A; this interaction plays an important role in virion uncoating after viral entry.

Its subcellular location is the virion membrane. It is found in the host endomembrane system. The protein resides in the host cytoplasm. In terms of biological role, plays a major role in assembly, budding and uncoating of virion after membrane fusion. Completely covers the ribonucleoprotein coil and keep it in condensed bullet-shaped form. Inhibits viral transcription and stimulates replication. Plays a major role in early induction of TRAIL-mediated apoptosis in infected neurons. Inhibits the integrated stress response (ISR) in the infected cell by blocking the formation of stress granules. The sequence is that of Matrix protein (M) from Homo sapiens (Human).